The primary structure comprises 187 residues: Probable cobalt-precorrin-6B C(15)-methyltransferase (decarboxylating) (187 aa).

S-adenosyl-L-methionine is bound by residues Thr-15, Gly-39–Gly-43, Glu-60, and Ala-89.

Belongs to the methyltransferase superfamily. Archaeal-type CbiT family.

It catalyses the reaction Co-precorrin-6B + S-adenosyl-L-methionine = Co-precorrin-7 + S-adenosyl-L-homocysteine + CO2. Its pathway is cofactor biosynthesis; adenosylcobalamin biosynthesis; cob(II)yrinate a,c-diamide from sirohydrochlorin (anaerobic route): step 8/10. Its function is as follows. Catalyzes the methylation of C-15 in cobalt-precorrin-6B followed by the decarboxylation of C-12 to form cobalt-precorrin-7. The sequence is that of Probable cobalt-precorrin-6B C(15)-methyltransferase (decarboxylating) from Halobacterium salinarum (strain ATCC 700922 / JCM 11081 / NRC-1) (Halobacterium halobium).